The sequence spans 340 residues: Glycerol-3-phosphate dehydrogenase [NAD(P)+] (340 aa).

4 residues coordinate NADPH: Ser12, Trp13, Lys34, and Lys107. 3 residues coordinate sn-glycerol 3-phosphate: Lys107, Gly138, and Ser140. Ala142 lines the NADPH pocket. Sn-glycerol 3-phosphate is bound by residues Lys193, Asp246, Ser256, Arg257, and Asn258. Residue Lys193 is the Proton acceptor of the active site. Residue Arg257 participates in NADPH binding. Residues Ile281 and Glu283 each coordinate NADPH.

The protein belongs to the NAD-dependent glycerol-3-phosphate dehydrogenase family.

The protein localises to the cytoplasm. It catalyses the reaction sn-glycerol 3-phosphate + NAD(+) = dihydroxyacetone phosphate + NADH + H(+). It carries out the reaction sn-glycerol 3-phosphate + NADP(+) = dihydroxyacetone phosphate + NADPH + H(+). It participates in membrane lipid metabolism; glycerophospholipid metabolism. Its function is as follows. Catalyzes the reduction of the glycolytic intermediate dihydroxyacetone phosphate (DHAP) to sn-glycerol 3-phosphate (G3P), the key precursor for phospholipid synthesis. In Enterococcus faecalis (strain ATCC 700802 / V583), this protein is Glycerol-3-phosphate dehydrogenase [NAD(P)+].